The chain runs to 286 residues: MKHFSVKACAKINLGLLITSRRDDGYHTLETIFAPIEWHDTLEFTESDKIGMECTNLDLPVDDTNLCIRAAKALQDYAGISKGVSMKLVKRVPFGAGLGGGSSDAAATLNALCRLWEIDVPSAVLHRLAVKLGADVPYFLEMKGLAYASGIGEELEDLSLALPWHVVTVFPEVQVPTAWAYKNFHRQFERPVPDLKALVRRLCDDRDLSVLDAFENDFGSVVFENYPVVSQVRDTLEASGAQFVSLSGSGSAVYALFENRALADETAEEMAGKFRVNVTPAGFRME.

Lys-11 is an active-site residue. 93 to 103 is an ATP binding site; that stretch reads PFGAGLGGGSS. Asp-135 is an active-site residue.

This sequence belongs to the GHMP kinase family. IspE subfamily.

It catalyses the reaction 4-CDP-2-C-methyl-D-erythritol + ATP = 4-CDP-2-C-methyl-D-erythritol 2-phosphate + ADP + H(+). Its pathway is isoprenoid biosynthesis; isopentenyl diphosphate biosynthesis via DXP pathway; isopentenyl diphosphate from 1-deoxy-D-xylulose 5-phosphate: step 3/6. In terms of biological role, catalyzes the phosphorylation of the position 2 hydroxy group of 4-diphosphocytidyl-2C-methyl-D-erythritol. In Chlorobaculum parvum (strain DSM 263 / NCIMB 8327) (Chlorobium vibrioforme subsp. thiosulfatophilum), this protein is 4-diphosphocytidyl-2-C-methyl-D-erythritol kinase.